Here is a 544-residue protein sequence, read N- to C-terminus: Glucans biosynthesis protein G (544 aa).

The first 34 residues, 1–34 (MVSLLRCQSSKPYSSLICSLALGVAFALSGTAYA), serve as a signal peptide directing secretion.

The protein belongs to the OpgD/OpgG family.

It localises to the periplasm. It participates in glycan metabolism; osmoregulated periplasmic glucan (OPG) biosynthesis. Involved in the biosynthesis of osmoregulated periplasmic glucans (OPGs). The chain is Glucans biosynthesis protein G from Shewanella putrefaciens (strain CN-32 / ATCC BAA-453).